The following is a 179-amino-acid chain: Bifunctional protein PyrR (179 aa).

Residues 100 to 112 carry the PRPP-binding motif; the sequence is VILVDDVLFTGRT.

Belongs to the purine/pyrimidine phosphoribosyltransferase family. PyrR subfamily. In terms of assembly, homodimer and homohexamer; in equilibrium.

It catalyses the reaction UMP + diphosphate = 5-phospho-alpha-D-ribose 1-diphosphate + uracil. Regulates transcriptional attenuation of the pyrimidine nucleotide (pyr) operon by binding in a uridine-dependent manner to specific sites on pyr mRNA. This disrupts an antiterminator hairpin in the RNA and favors formation of a downstream transcription terminator, leading to a reduced expression of downstream genes. In terms of biological role, also displays a weak uracil phosphoribosyltransferase activity which is not physiologically significant. The protein is Bifunctional protein PyrR of Geobacillus thermodenitrificans (strain NG80-2).